We begin with the raw amino-acid sequence, 698 residues long: Polyribonucleotide nucleotidyltransferase (698 aa).

2 residues coordinate Mg(2+): D485 and D491. Residues 552-612 (PRVEMMTIPE…SDLKGAKSIV (61 aa)) form the KH domain. In terms of domain architecture, S1 motif spans 622–690 (GMVYDGTVKK…KLGRLNLSYV (69 aa)).

It belongs to the polyribonucleotide nucleotidyltransferase family. The cofactor is Mg(2+).

The protein resides in the cytoplasm. It carries out the reaction RNA(n+1) + phosphate = RNA(n) + a ribonucleoside 5'-diphosphate. Its function is as follows. Involved in mRNA degradation. Catalyzes the phosphorolysis of single-stranded polyribonucleotides processively in the 3'- to 5'-direction. The protein is Polyribonucleotide nucleotidyltransferase of Treponema denticola (strain ATCC 35405 / DSM 14222 / CIP 103919 / JCM 8153 / KCTC 15104).